The primary structure comprises 52 residues: Metallothionein-2 (52 aa).

Repeats lie at residues Gln43 to Cys47 and Gln48 to Cys52.

The protein belongs to the metallothionein superfamily. Type 10 family.

In terms of biological role, the metallothioneins are involved in the cellular sequestration of toxic metal ions. In Candida glabrata (strain ATCC 2001 / BCRC 20586 / JCM 3761 / NBRC 0622 / NRRL Y-65 / CBS 138) (Yeast), this protein is Metallothionein-2 (MT-II).